The following is a 261-amino-acid chain: Proteasome subunit alpha (261 aa).

The disordered stretch occupies residues 242-261; sequence NEENKKEEENREETKEKQEE.

It belongs to the peptidase T1A family. In terms of assembly, the 20S proteasome core is composed of 14 alpha and 14 beta subunits that assemble into four stacked heptameric rings, resulting in a barrel-shaped structure. The two inner rings, each composed of seven catalytic beta subunits, are sandwiched by two outer rings, each composed of seven alpha subunits. The catalytic chamber with the active sites is on the inside of the barrel. Has a gated structure, the ends of the cylinder being occluded by the N-termini of the alpha-subunits. Is capped at one or both ends by the proteasome regulatory ATPase, PAN.

The protein localises to the cytoplasm. The formation of the proteasomal ATPase PAN-20S proteasome complex, via the docking of the C-termini of PAN into the intersubunit pockets in the alpha-rings, triggers opening of the gate for substrate entry. Interconversion between the open-gate and close-gate conformations leads to a dynamic regulation of the 20S proteasome proteolysis activity. Component of the proteasome core, a large protease complex with broad specificity involved in protein degradation. The M.jannaschii proteasome is able to cleave oligopeptides after Glu, Asp, Tyr, Phe, Trp, slightly after Arg, but not after Ala. Thus, displays caspase-like and chymotrypsin-like activities and low level of trypsin-like activity. The chain is Proteasome subunit alpha from Methanocaldococcus jannaschii (strain ATCC 43067 / DSM 2661 / JAL-1 / JCM 10045 / NBRC 100440) (Methanococcus jannaschii).